The following is a 936-amino-acid chain: Coiled-coil domain-containing protein 191 (936 aa).

2 coiled-coil regions span residues 189-270 and 364-440; these read RLTM…VKAA and RDYT…LQAA. A disordered region spans residues 495-541; the sequence is LGRTTTGNLQGSLQNVSLSAPGNKQHKTLGAEPSQQPGSNETLRTTS. Composition is skewed to polar residues over residues 497–516 and 527–541; these read RTTT…SAPG and PSQQ…RTTS. A coiled-coil region spans residues 554 to 592; it reads NRHVFQQQLIEKQKKKLQEQQKTILELKKNLQLAEAQWA. 2 disordered regions span residues 607 to 656 and 691 to 714; these read LSKP…TPHP and KAQE…RKRE. Positions 662 to 739 form a coiled coil; sequence EERAIQRAEC…IKRNQQLEAI (78 aa).

The sequence is that of Coiled-coil domain-containing protein 191 (CCDC191) from Homo sapiens (Human).